A 272-amino-acid polypeptide reads, in one-letter code: Ribonuclease HII (272 aa).

The region spanning 30-221 (GPVAGVDEVG…VRRAAEATGV (192 aa)) is the RNase H type-2 domain. A divalent metal cation-binding residues include Asp36, Glu37, and Asp130.

It belongs to the RNase HII family. The cofactor is Mn(2+). Mg(2+) serves as cofactor.

The protein localises to the cytoplasm. It catalyses the reaction Endonucleolytic cleavage to 5'-phosphomonoester.. Functionally, endonuclease that specifically degrades the RNA of RNA-DNA hybrids. This chain is Ribonuclease HII, found in Mycolicibacterium smegmatis (strain ATCC 700084 / mc(2)155) (Mycobacterium smegmatis).